Reading from the N-terminus, the 490-residue chain is MSQSVSERTRIKSDRYESGVIPYAKMGYWDAAYAVKNTDVLALFRITPQPGVDPVEAAAAVAGESSTATWTVVWTDLLTACDRYRAKAYRVDPVPNTTDQYFAFIAYECDLFEEGSLANLTASIIGNVFGFKAVSALRLEDMRIPHSYLKTFQGPATGVIVERERLNKYGIPLLGATVKPKLGLSGKNYGRVVYEGLKGGLDFLKDDENINSQPFMRWRERFLYCMEGINRASAATGETKGSYLNITAGTMEEVYKRAEYAKTVGSIVVMIDLVMGYTAIQSAAIWARDNDLILHLHRAGNSTYARQKNHGINFRVICKWMRMCGVDHIHAGTVVGKLEGDPLMIKGFYDTLLLTHLNVNLPYGIFFEMTWASLRKCMPVASGGIHCGQMHQLVHYLGDDVVLQFGGGTIGHPDGIQAGATANRVALEAMILARNEGADYFNSDIGPQILRNAAKTCGPLQTALDLWKDISFNYTSTDTSDFSVTPTANV.

Residues asparagine 127 and threonine 177 each contribute to the substrate site. The Proton acceptor role is filled by lysine 179. Residue lysine 181 participates in substrate binding. Positions 205, 207, and 208 each coordinate Mg(2+). Lysine 205 is modified (N6-carboxylysine). Residue histidine 297 is the Proton acceptor of the active site. Positions 298, 330, and 382 each coordinate substrate.

This sequence belongs to the RuBisCO large chain family. Type I subfamily. As to quaternary structure, heterohexadecamer of 8 large chains and 8 small chains. The cofactor is Mg(2+).

It is found in the plastid. The protein localises to the chloroplast. The catalysed reaction is 2 (2R)-3-phosphoglycerate + 2 H(+) = D-ribulose 1,5-bisphosphate + CO2 + H2O. The enzyme catalyses D-ribulose 1,5-bisphosphate + O2 = 2-phosphoglycolate + (2R)-3-phosphoglycerate + 2 H(+). Functionally, ruBisCO catalyzes two reactions: the carboxylation of D-ribulose 1,5-bisphosphate, the primary event in carbon dioxide fixation, as well as the oxidative fragmentation of the pentose substrate in the photorespiration process. Both reactions occur simultaneously and in competition at the same active site. The protein is Ribulose bisphosphate carboxylase large chain of Phaeodactylum tricornutum (strain CCAP 1055/1).